Consider the following 322-residue polypeptide: CRISPR-associated endonuclease Cas1 (322 aa).

Positions 149, 214, and 229 each coordinate Mn(2+).

It belongs to the CRISPR-associated endonuclease Cas1 family. Homodimer, forms a heterotetramer with a Cas2 homodimer. Mg(2+) serves as cofactor. Mn(2+) is required as a cofactor.

CRISPR (clustered regularly interspaced short palindromic repeat), is an adaptive immune system that provides protection against mobile genetic elements (viruses, transposable elements and conjugative plasmids). CRISPR clusters contain spacers, sequences complementary to antecedent mobile elements, and target invading nucleic acids. CRISPR clusters are transcribed and processed into CRISPR RNA (crRNA). Acts as a dsDNA endonuclease. Involved in the integration of spacer DNA into the CRISPR cassette. The polypeptide is CRISPR-associated endonuclease Cas1 (Pyrococcus horikoshii (strain ATCC 700860 / DSM 12428 / JCM 9974 / NBRC 100139 / OT-3)).